A 173-amino-acid polypeptide reads, in one-letter code: uncharacterized protein (173 aa).

Positions 16–133 constitute an MSP domain; that stretch reads DLVLRPETIT…KHVLIRFPNK (118 aa). Positions 141-163 are enriched in basic and acidic residues; sequence KKMEEDDMKQQKERNKLSNEKMG. The disordered stretch occupies residues 141–173; sequence KKMEEDDMKQQKERNKLSNEKMGIRNQNMGEKK.

This is an uncharacterized protein from Caenorhabditis elegans.